The following is a 403-amino-acid chain: Flavohemoprotein (403 aa).

One can recognise a Globin domain in the interval 1–138 (MLTQKTKDIV…LADILAGMES (138 aa)). Residue His-85 coordinates heme b. Catalysis depends on charge relay system residues Tyr-95 and Glu-137. Positions 149 to 403 (GGWAGWRRFI…EVFGPDLFAE (255 aa)) are reductase. In terms of domain architecture, FAD-binding FR-type spans 152-262 (AGWRRFIVRE…AAPYGNFYID (111 aa)). FAD is bound by residues Tyr-190 and 206-209 (RQYS). 275 to 280 (GVGLTP) is an NADP(+) binding site. 395 to 398 (VFGP) is an FAD binding site.

It belongs to the globin family. Two-domain flavohemoproteins subfamily. The protein in the C-terminal section; belongs to the flavoprotein pyridine nucleotide cytochrome reductase family. The cofactor is heme b. Requires FAD as cofactor.

The catalysed reaction is 2 nitric oxide + NADPH + 2 O2 = 2 nitrate + NADP(+) + H(+). The enzyme catalyses 2 nitric oxide + NADH + 2 O2 = 2 nitrate + NAD(+) + H(+). Functionally, is involved in NO detoxification in an aerobic process, termed nitric oxide dioxygenase (NOD) reaction that utilizes O(2) and NAD(P)H to convert NO to nitrate, which protects the bacterium from various noxious nitrogen compounds. Therefore, plays a central role in the inducible response to nitrosative stress. This chain is Flavohemoprotein, found in Rhizobium meliloti (strain 1021) (Ensifer meliloti).